A 237-amino-acid polypeptide reads, in one-letter code: MRSFQRGALDLRPVVLTPGVSRYAEGSVQVEFGHTKVLVTCSTEERVPPHLMGKGSGWVTAEYGMLPRATHSRNQRESAKGKQTGRTMEIQRLIGRSLRAAVDLSTLGPRTLTLDCDVLQADGGTRTASITGAYVALVLALRSLQKAGTISKLPKLTPLAAVSVGIVKGEVRVDLDYDEDSTADVDLNLVATADGRMVELQGTAEHQLFDRKALDAMVDGGLAAIQKLTAAQAQVLG.

Residues arginine 86 and 124-126 contribute to the phosphate site; that span reads GTR.

The protein belongs to the RNase PH family. In terms of assembly, homohexameric ring arranged as a trimer of dimers.

It catalyses the reaction tRNA(n+1) + phosphate = tRNA(n) + a ribonucleoside 5'-diphosphate. Functionally, phosphorolytic 3'-5' exoribonuclease that plays an important role in tRNA 3'-end maturation. Removes nucleotide residues following the 3'-CCA terminus of tRNAs; can also add nucleotides to the ends of RNA molecules by using nucleoside diphosphates as substrates, but this may not be physiologically important. Probably plays a role in initiation of 16S rRNA degradation (leading to ribosome degradation) during starvation. The protein is Ribonuclease PH of Myxococcus xanthus (strain DK1622).